We begin with the raw amino-acid sequence, 525 residues long: Light-independent protochlorophyllide reductase subunit B (525 aa).

Asp-36 is a binding site for [4Fe-4S] cluster. Catalysis depends on Asp-274, which acts as the Proton donor. Residue 409–410 (GL) coordinates substrate. The tract at residues 433–464 (HGGKAVAREESPVAPADLAPAATSDTPAAPSP) is disordered. Residues 444-464 (PVAPADLAPAATSDTPAAPSP) show a composition bias toward low complexity.

The protein belongs to the ChlB/BchB/BchZ family. As to quaternary structure, protochlorophyllide reductase is composed of three subunits; BchL, BchN and BchB. Forms a heterotetramer of two BchB and two BchN subunits. Requires [4Fe-4S] cluster as cofactor.

The catalysed reaction is chlorophyllide a + oxidized 2[4Fe-4S]-[ferredoxin] + 2 ADP + 2 phosphate = protochlorophyllide a + reduced 2[4Fe-4S]-[ferredoxin] + 2 ATP + 2 H2O. It functions in the pathway porphyrin-containing compound metabolism; bacteriochlorophyll biosynthesis (light-independent). Its function is as follows. Component of the dark-operative protochlorophyllide reductase (DPOR) that uses Mg-ATP and reduced ferredoxin to reduce ring D of protochlorophyllide (Pchlide) to form chlorophyllide a (Chlide). This reaction is light-independent. The NB-protein (BchN-BchB) is the catalytic component of the complex. The sequence is that of Light-independent protochlorophyllide reductase subunit B from Rhodobacter capsulatus (strain ATCC BAA-309 / NBRC 16581 / SB1003).